We begin with the raw amino-acid sequence, 2488 residues long: Neuron navigator 2 (2488 aa).

Residues 85–192 (GFDTQIYTDW…LFFSLSRYKQ (108 aa)) enclose the Calponin-homology (CH) domain. Low complexity-rich tracts occupy residues 194–204 (QQQPQKQHLSS), 221–247 (QAGT…PHQQ), and 255–267 (QSSA…SQSK). Disordered regions lie at residues 194 to 675 (QQQP…GSNT) and 706 to 727 (TEGN…SHFT). Positions 299 to 315 (GGSTTANNRRSQSFNNY) are enriched in polar residues. A compositionally biased stretch (low complexity) spans 356–369 (SGSSSTPTNCSTSS). Positions 384-396 (KSLSVKHSATVSM) are enriched in polar residues. Residues 401 to 410 (PPGPEAPRPT) are compositionally biased toward pro residues. Positions 492–506 (RTFSRALTNKKSSLK) are enriched in polar residues. Residues 498–531 (LTNKKSSLKGNEKEKEKQQREKDKEKSKDLAKRA) are a coiled coil. Residues 507-547 (GNEKEKEKQQREKDKEKSKDLAKRASVTERLDLKEEPKEDP) are compositionally biased toward basic and acidic residues. Low complexity predominate over residues 592–606 (MKSMPGKSPSAPAPS). Residues 615–626 (GKLSSGLPQQKP) are compositionally biased toward polar residues. Low complexity-rich tracts occupy residues 633–642 (SSSSSSLASS) and 657–675 (SSQT…GSNT). Polar residues predominate over residues 706–719 (TEGNVTAESSSTGV). Positions 743 to 771 (EARRLRTVKNIADLRQNLEETMSSLRGTQ) form a coiled coil. 9 disordered regions span residues 804–824 (LSWR…PSMG), 939–1151 (LGLG…QSGS), 1177–1200 (KSSA…NQDD), 1213–1283 (YRSL…SDNE), 1295–1338 (PAAQ…PIAT), 1355–1412 (MTQQ…TNAS), 1440–1460 (SLSS…ASSK), 1473–1560 (VKTT…VTSP), and 1591–1629 (SLSN…SFRD). Residues 939–985 (LGLGDADSWDDSSSVSSGISDTIDNLSTDDINTSSSISSYANTPASS) are compositionally biased toward low complexity. Residues 1091–1102 (KTDDAKVSEKGR) are compositionally biased toward basic and acidic residues. Residues 1130-1142 (PSSSRTPTANANS) show a composition bias toward polar residues. Over residues 1220-1245 (SKSNSRNGAGNRSSTSSIDSNISSKS) the composition is skewed to low complexity. Over residues 1299–1309 (PVSSPAQTSLQ) the composition is skewed to polar residues. 2 stretches are compositionally biased toward low complexity: residues 1363-1380 (SPSG…PLYS) and 1388-1404 (SPLA…PSNS). Positions 1440–1456 (SLSSGGVPSHNSSTGLI) are enriched in polar residues. Low complexity predominate over residues 1477–1489 (LSESPLSSPAASP). Ser1480, Ser1484, and Ser1488 each carry phosphoserine. 2 stretches are compositionally biased toward basic and acidic residues: residues 1498–1510 (RKQD…DRNT) and 1526–1535 (TQEDAKEWLR). Over residues 1549–1560 (SPFSSGSSVTSP) the composition is skewed to low complexity. Residues 1686–1773 (EEKCQSEIRK…AAAQAAINGV (88 aa)) are a coiled coil. 2 disordered regions span residues 1790–1887 (ADLR…LRNS) and 1951–1985 (AEND…MGLS). Polar residues-rich tracts occupy residues 1800–1820 (SDSV…SNIE), 1875–1887 (NGST…LRNS), and 1959–1985 (ESQG…MGLS). Residues 1897–1964 (MDSEAETVMQ…RLKSESQGSG (68 aa)) are a coiled coil. Position 1977 is a phosphoserine (Ser1977). 2157–2164 (GPSGTGKT) contributes to the ATP binding site. The segment at 2423 to 2488 (DGYSMPREGS…ILDSSLESTL (66 aa)) is disordered. Over residues 2460–2473 (YSSPQSYDSDSNSN) the composition is skewed to low complexity.

It belongs to the Nav/unc-53 family. In terms of tissue distribution, highly expressed in the brain, kidney and liver. Also expressed in the thyroid, mammary gland, spinal cord, heart, placenta and lung. Abundantly expressed in colon cancers.

It is found in the nucleus. It carries out the reaction ATP + H2O = ADP + phosphate + H(+). Its function is as follows. Possesses 3' to 5' helicase activity and exonuclease activity. Involved in neuronal development, specifically in the development of different sensory organs. This Homo sapiens (Human) protein is Neuron navigator 2 (NAV2).